A 491-amino-acid polypeptide reads, in one-letter code: MASEFRPPLHFVLFPFMAQGHMIPMVDIARLLAQRGVTITIVTTPQNAGRFKNVLSRAIQSGLPINLVQVKFPSQESGSPEGQENLDLLDSLGASLTFFKAFSLLEEPVEKLLKEIQPRPNCIIADMCLPYTNRIAKNLGIPKIIFHGMCCFNLLCTHIMHQNHEFLETIESDKEYFPIPNFPDRVEFTKSQLPMVLVAGDWKDFLDGMTEGDNTSYGVIVNTFEELEPAYVRDYKKVKAGKIWSIGPVSLCNKLGEDQAERGNKADIDQDECIKWLDSKEEGSVLYVCLGSICNLPLSQLKELGLGLEESQRPFIWVIRGWEKYNELLEWISESGYKERIKERGLLITGWSPQMLILTHPAVGGFLTHCGWNSTLEGITSGVPLLTWPLFGDQFCNEKLAVQILKAGVRAGVEESMRWGEEEKIGVLVDKEGVKKAVEELMGDSNDAKERRKRVKELGELAHKAVEEGGSSHSNITFLLQDIMQLEQPKK.

UDP-alpha-D-glucose-binding positions include serine 292, 352–354 (SPQ), 369–377 (HCGWNSTLE), and 391–394 (FGDQ).

The protein belongs to the UDP-glycosyltransferase family.

In terms of biological role, involved in the O-glucosylation of trans-zeatin and dihydrozeatin. Also active in vitro on cis-zeatin, dihydrozeatin-9-N-Glc, and olomoucine. Can detoxify the explosive 2,4,6-trinitrotoluene in plant by forming O- or C-glucose conjugates. The chain is UDP-glycosyltransferase 73C1 (UGT73C1) from Arabidopsis thaliana (Mouse-ear cress).